The primary structure comprises 429 residues: Phosphoribosylamine--glycine ligase (429 aa).

The region spanning 109 to 316 (KDFLARHQIP…LVDLCLAACD (208 aa)) is the ATP-grasp domain. An ATP-binding site is contributed by 135-196 (LREKGAPIVI…EEFLDGEEAS (62 aa)). Positions 286 and 288 each coordinate Mg(2+).

This sequence belongs to the GARS family. As to quaternary structure, monomer. Mg(2+) serves as cofactor. Requires Mn(2+) as cofactor.

The enzyme catalyses 5-phospho-beta-D-ribosylamine + glycine + ATP = N(1)-(5-phospho-beta-D-ribosyl)glycinamide + ADP + phosphate + H(+). The protein operates within purine metabolism; IMP biosynthesis via de novo pathway; N(1)-(5-phospho-D-ribosyl)glycinamide from 5-phospho-alpha-D-ribose 1-diphosphate: step 2/2. This Salmonella typhimurium (strain LT2 / SGSC1412 / ATCC 700720) protein is Phosphoribosylamine--glycine ligase.